Consider the following 197-residue polypeptide: Imidazoleglycerol-phosphate dehydratase (197 aa).

This sequence belongs to the imidazoleglycerol-phosphate dehydratase family.

It localises to the cytoplasm. The enzyme catalyses D-erythro-1-(imidazol-4-yl)glycerol 3-phosphate = 3-(imidazol-4-yl)-2-oxopropyl phosphate + H2O. It participates in amino-acid biosynthesis; L-histidine biosynthesis; L-histidine from 5-phospho-alpha-D-ribose 1-diphosphate: step 6/9. This Laribacter hongkongensis (strain HLHK9) protein is Imidazoleglycerol-phosphate dehydratase.